Reading from the N-terminus, the 359-residue chain is Heat-inducible transcription repressor HrcA (359 aa).

Belongs to the HrcA family.

Functionally, negative regulator of class I heat shock genes (grpE-dnaK-dnaJ and groELS operons). Prevents heat-shock induction of these operons. The chain is Heat-inducible transcription repressor HrcA from Sinorhizobium medicae (strain WSM419) (Ensifer medicae).